The following is a 312-amino-acid chain: Acyl-CoA C20 Delta5-desaturase (312 aa).

A run of 2 helical transmembrane segments spans residues 45–65 (VFHILFIGGLHVLCLFAPSTF) and 69–89 (SFWVCFALYAICGVFGTTLSF). Histidine 90, histidine 95, histidine 127, histidine 130, and histidine 131 together coordinate Fe cation. Residues 90-95 (HRNLTH) carry the Histidine box-1 motif. The short motif at 127-131 (HRYHH) is the Histidine box-2 element. Residues 193 to 213 (LQAALLYLFGGFPFIVWGMAV) traverse the membrane as a helical segment. Residues histidine 230, histidine 259, histidine 262, and histidine 263 each contribute to the Fe cation site. A Histidine box-3 motif is present at residues 259-263 (HNNHH).

This sequence belongs to the fatty acid desaturase type 1 family. It depends on Fe(2+) as a cofactor.

It is found in the membrane. The enzyme catalyses (11Z,14Z)-eicosadienoyl-CoA + AH2 + O2 = (5Z,11Z,14Z)-eicosatrienoyl-CoA + A + 2 H2O. The catalysed reaction is (11Z,14Z,17Z)-eicosatrienoyl-CoA + AH2 + O2 = (5Z,11Z,14Z,17Z)-eicosatetraenoyl-CoA + A + 2 H2O. It participates in lipid metabolism; polyunsaturated fatty acid biosynthesis. Its function is as follows. Catalyzes the desaturation of 20:2Delta(11,14) and 20:3Delta(11,14,17) to generate sciadonic acid (20:3Delta(5,11,14)) and juniperonic acid (20:4Delta(5,11,14,17)). The chain is Acyl-CoA C20 Delta5-desaturase from Anemone leveillei (Windflower).